The following is a 446-amino-acid chain: ATP-dependent protease ATPase subunit HslU (446 aa).

ATP-binding positions include V18, 60 to 65 (GVGKTE), D259, E324, and R396.

It belongs to the ClpX chaperone family. HslU subfamily. In terms of assembly, a double ring-shaped homohexamer of HslV is capped on each side by a ring-shaped HslU homohexamer. The assembly of the HslU/HslV complex is dependent on binding of ATP.

The protein localises to the cytoplasm. In terms of biological role, ATPase subunit of a proteasome-like degradation complex; this subunit has chaperone activity. The binding of ATP and its subsequent hydrolysis by HslU are essential for unfolding of protein substrates subsequently hydrolyzed by HslV. HslU recognizes the N-terminal part of its protein substrates and unfolds these before they are guided to HslV for hydrolysis. This is ATP-dependent protease ATPase subunit HslU from Dechloromonas aromatica (strain RCB).